Reading from the N-terminus, the 800-residue chain is Metabotropic glutamate receptor-like protein C (800 aa).

A signal peptide spans 1–21 (MKMKIIFLILILIFSINIIKC). Over 22–392 (DKEFKMLTLL…EVEFSQSLQY (371 aa)) the chain is Extracellular. Asparagine 69, asparagine 107, asparagine 166, asparagine 258, asparagine 276, asparagine 302, and asparagine 345 each carry an N-linked (GlcNAc...) asparagine glycan. A helical membrane pass occupies residues 393-413 (GFSITTGVLIAITIIMMLGIV). Topologically, residues 414–426 (RYKSTPSIRSASP) are cytoplasmic. A helical transmembrane segment spans residues 427–447 (IFLNFILAGGIIVYIGIIVWV). Over 448–463 (GPANDHQCNARLWLVT) the chain is Extracellular. A helical membrane pass occupies residues 464-484 (LGFSTLIGSLVVKNFRIWLIF). Residues 485–499 (DNPELKSISITNYQL) are Cytoplasmic-facing. The helical transmembrane segment at 500-520 (FPWVGACLVINIILMSILTSV) threads the bilayer. Residues 521-551 (GDLREIDAQGIDSLGKYEFMKVCKMNSSGAS) are Extracellular-facing. N-linked (GlcNAc...) asparagine glycosylation is present at asparagine 546. A helical membrane pass occupies residues 552-572 (TLYTILAYFAALLLVGVFVSW). The Cytoplasmic segment spans residues 573 to 586 (KIRIVDIQEFNESK). Residues 587–607 (AIANTLYAISFCLFVIVPLMI) form a helical membrane-spanning segment. Over 608–616 (SPQDKQSET) the chain is Extracellular. A helical membrane pass occupies residues 617 to 637 (IVLCTAGLFITTAALLIIFTP). The Cytoplasmic segment spans residues 638-800 (KFWRVFTLGD…NDTEEEDKNQ (163 aa)). Disordered regions lie at residues 658–694 (QSNV…TETS) and 718–800 (EFDD…DKNQ). A compositionally biased stretch (acidic residues) spans 718–732 (EFDDNNIEQDNDNDN). Residues 733 to 774 (DNNNNNNNNNNNNNNNNNNNNNNNNNNNNNNNNNNNNNNNNN) are compositionally biased toward low complexity. Residues 781–791 (NDEKVEEKQQN) show a composition bias toward basic and acidic residues.

In the N-terminal section; belongs to the BMP lipoprotein family. It in the C-terminal section; belongs to the G-protein coupled receptor 3 family. GABA-B receptor subfamily.

It is found in the membrane. The sequence is that of Metabotropic glutamate receptor-like protein C (grlC) from Dictyostelium discoideum (Social amoeba).